The primary structure comprises 315 residues: COMPASS component SWD3 (315 aa).

6 WD repeats span residues 53–93 (SHAR…HTFI), 94–133 (GHTA…LMKT), 136–178 (AHSE…KTLT), 187–228 (NGVV…RTFQ), 238–278 (HHSC…LLQL), and 285–315 (HHSS…WRWV).

In terms of assembly, component of the Set1C/COMPASS complex which consists of SET1(2), BRE2(2), SPP1(2), SDC1(1), SHG1(1), SWD1(1), SWD2(1), and SWD3(1).

The protein resides in the nucleus. Its subcellular location is the chromosome. It is found in the telomere. Its function is as follows. The COMPASS (Set1C) complex specifically mono-, di- and trimethylates histone H3 to form H3K4me1/2/3, which subsequently plays a role in telomere length maintenance and transcription elongation regulation. COMPASS recognizes ubiquitinated H2B on one face of the nucleosome which stimulates the methylation of H3 on the opposing face. SWD3/CPS30 establishes COMPASS trimethylation activity and may also serve as the anchor point to properly tether and space the other subunits. The protein is COMPASS component SWD3 of Saccharomyces cerevisiae (strain ATCC 204508 / S288c) (Baker's yeast).